The primary structure comprises 626 residues: Serine/threonine-protein kinase PknH (626 aa).

At 1–403 the chain is on the cytoplasmic side; the sequence is MSDAQDSRVG…QTPRKTNPWP (403 aa). Residues 16–276 enclose the Protein kinase domain; it reads YHLKRLLGRG…DLALAAHEAL (261 aa). ATP is bound by residues 22 to 30 and Lys45; that span reads LGRGGMGEV. The Proton acceptor role is filled by Asp139. Thr170 carries the post-translational modification Phosphothreonine. Residues 292 to 396 are disordered; it reads QESTLPAPPK…GGPSPWAQTP (105 aa). Pro residues-rich tracts occupy residues 297–308 and 316–342; these read PAPPKPVPPPTM and RQPPAPPVTPPGVQPAPKPSYTPPAQP. The segment covering 343–355 has biased composition (low complexity); the sequence is GPAGQRPGPTGQP. The chain crosses the membrane as a helical span at residues 404–424; the sequence is LVAGAAAVVLVLVLGAIGIWI. The Extracellular portion of the chain corresponds to 425–626; the sequence is AIRPKPVQPP…AKIVDKVNKE (202 aa). Cystine bridges form between Cys482–Cys545 and Cys587–Cys604.

This sequence belongs to the protein kinase superfamily. Ser/Thr protein kinase family. A divalent metal cation is required as a cofactor. Post-translationally, autophosphorylated on threonine and serine residues. Dephosphorylated by PstP.

The protein resides in the cell membrane. The enzyme catalyses L-seryl-[protein] + ATP = O-phospho-L-seryl-[protein] + ADP + H(+). It carries out the reaction L-threonyl-[protein] + ATP = O-phospho-L-threonyl-[protein] + ADP + H(+). Its activity is regulated as follows. Inhibited by the kinase inhibitors staurosporine and H-7. Its function is as follows. May regulate bacterial growth in response to external signals to facilitate adaptation to the host environment. In vitro, phosphorylates several substrates such as EmbR, DevR (DosR), DacB1 and Rv0681. The sequence is that of Serine/threonine-protein kinase PknH (pknH) from Mycobacterium tuberculosis (strain ATCC 25618 / H37Rv).